A 215-amino-acid chain; its full sequence is Endonuclease III (215 aa).

The 20-residue stretch at R113–N132 folds into the HhH domain. [4Fe-4S] cluster is bound by residues C192, C199, C202, and C208.

The protein belongs to the Nth/MutY family. Requires [4Fe-4S] cluster as cofactor.

The catalysed reaction is 2'-deoxyribonucleotide-(2'-deoxyribose 5'-phosphate)-2'-deoxyribonucleotide-DNA = a 3'-end 2'-deoxyribonucleotide-(2,3-dehydro-2,3-deoxyribose 5'-phosphate)-DNA + a 5'-end 5'-phospho-2'-deoxyribonucleoside-DNA + H(+). Its function is as follows. DNA repair enzyme that has both DNA N-glycosylase activity and AP-lyase activity. The DNA N-glycosylase activity releases various damaged pyrimidines from DNA by cleaving the N-glycosidic bond, leaving an AP (apurinic/apyrimidinic) site. The AP-lyase activity cleaves the phosphodiester bond 3' to the AP site by a beta-elimination, leaving a 3'-terminal unsaturated sugar and a product with a terminal 5'-phosphate. This chain is Endonuclease III, found in Buchnera aphidicola subsp. Baizongia pistaciae (strain Bp).